The chain runs to 507 residues: E3 ubiquitin-protein ligase makorin-3 (507 aa).

Low complexity predominate over residues 1 to 21 (MEEPAAPSEAHEAAGAQAGAE). 2 disordered regions span residues 1-48 (MEEP…DSAL) and 69-89 (RGGLRPAPASGGGAWPSPLPS). The C3H1-type 1 zinc-finger motif lies at 95–122 (WTKQIICRYYIHGQCKEGENCRYSHDLS). A disordered region spans residues 126–149 (MATEGGVSPPGASAGGGPSTAAHI). The C3H1-type 2 zinc-finger motif lies at 238 to 265 (GSGLRFCYYASRGVCFRGESCMYLHGDI). The segment at 266–293 (CDMCGLQTLHPMDAAQREEHMRACIEAH) is makorin-type Cys-His. The RING-type zinc finger occupies 311–365 (CGICMEVVYEKANPNDRRFGILSNCNHSFCIRCIRRWRSARQFENRIVKSCPQCR). Residues 394 to 423 (AMSNKACRYFAEGRGNCPFGDTCFYKHEYP) form a C3H1-type 3 zinc finger.

In terms of tissue distribution, ubiquitous.

The protein resides in the nucleus. It carries out the reaction S-ubiquitinyl-[E2 ubiquitin-conjugating enzyme]-L-cysteine + [acceptor protein]-L-lysine = [E2 ubiquitin-conjugating enzyme]-L-cysteine + N(6)-ubiquitinyl-[acceptor protein]-L-lysine.. The protein operates within protein modification; protein ubiquitination. In terms of biological role, E3 ubiquitin ligase catalyzing the covalent attachment of ubiquitin moieties onto substrate proteins. Acts as a key developmental timer that helps ensure puberty begins at the appropriate age, by inhibiting premature activation of the reproductive hormone cascade. Epigenetically regulates GNRH1 transcription by disrupting the binding of methyl-DNA binding protein 3/MBD3 to the promoter of GNRH1. Mechanistically, mediates the non-proteolytic ubiquitination of MBD3 at multiple sites with 'Lys27' ubiquitin linkages and thereby regulates the methylation status of the genome, including GNRH1 promoter. Modulates the stability and translation of GNRH1 mRNA by mediating the non-proteolytic ubiquitination of PABP family members PABPC1, PABPC3 and PABPC4 at multiple sites. Also participates in the maintenance of genomic and epigenomic stability by regulating the abundance of APEX2 via 'Lys-48'-linked ubiquitination. The polypeptide is E3 ubiquitin-protein ligase makorin-3 (MKRN3) (Homo sapiens (Human)).